The following is a 62-amino-acid chain: DNA gyrase inhibitor YacG (62 aa).

Zn(2+) contacts are provided by Cys9, Cys12, Cys27, and Cys31. Positions 43-52 are enriched in basic and acidic residues; that stretch reads GYRIPGEKAP. The segment at 43–62 is disordered; that stretch reads GYRIPGEKAPESGGEEPGDE.

This sequence belongs to the DNA gyrase inhibitor YacG family. As to quaternary structure, interacts with GyrB. It depends on Zn(2+) as a cofactor.

Inhibits all the catalytic activities of DNA gyrase by preventing its interaction with DNA. Acts by binding directly to the C-terminal domain of GyrB, which probably disrupts DNA binding by the gyrase. The polypeptide is DNA gyrase inhibitor YacG (Geobacter sp. (strain M21)).